Consider the following 346-residue polypeptide: Calcium homeostasis modulator protein 1 (346 aa).

Over 1–21 (MMDKFRMIFQFLQSNQESFMN) the chain is Cytoplasmic. A central pore region spans residues 10-37 (QFLQSNQESFMNGICGIMALASAQMYSA). A helical transmembrane segment spans residues 22–37 (GICGIMALASAQMYSA). Residues 38-49 (FDFNCPCLPGYN) lie on the Extracellular side of the membrane. 2 disulfide bridges follow: C42/C127 and C44/C161. Residues 50-72 (AAYSAGILLAPPLVLFLLGLVMN) traverse the membrane as a helical segment. Positions 63 to 70 (VLFLLGLV) are phospholipid-binding. The Cytoplasmic portion of the chain corresponds to 73-99 (NNVSMLAEEWKRPLGRRAKDPAVLRYM). The helical transmembrane segment at 100–125 (FCSMAQRALIAPVVWVAVTLLDGKCF) threads the bilayer. Residue C101 is the site of S-palmitoyl cysteine attachment. The segment at 105-117 (QRALIAPVVWVAV) is phospholipid-binding. Topologically, residues 126–180 (LCAFCTAVPVSALGNGSLAPGLPAPELARLLARVPCPEIYDGDWLLAREVAVRYL) are extracellular. N-linked (GlcNAc...) asparagine glycosylation occurs at N140. A helical membrane pass occupies residues 181–206 (RCISQALGWSFVLLTTLLAFVVRSVR). A phospholipid-binding region spans residues 192–202 (VLLTTLLAFVV). Topologically, residues 207–346 (PCFTQAAFLK…KEVATYFSKV (140 aa)) are cytoplasmic. C208 carries S-palmitoyl cysteine lipidation. The interval 313–346 (LRLGQEEPPLMGNGWAGGGPRPPRKEVATYFSKV) is disordered.

The protein belongs to the CALHM family. Oligomerizes to form hexamers and octamers. Does not form gap junctions. Associates with CALHM3 as a pore-forming subunit in a hetero-hexameric channel complex. N-glycosylated. Assembly with CALHM3 is associated with N-glycan remodeling and formation of hybrid complex- and high mannose-type glycochains. This N-glycan processing regulates channel trafficking and gating kinetics. In terms of processing, palmitoylated by ZDHHC3, ZDHHC20 and possibly ZDHHC7. Palmitoylation regulates voltage-dependent gating of the channel by shifting it toward more depolarized potentials. Predominantly expressed in adult brain. Detected also in retinoic acid-differentiated SH-SY5Y cells. Specifically expressed in circumvallate taste bud cells.

It is found in the cell membrane. Its subcellular location is the endoplasmic reticulum membrane. The protein localises to the basolateral cell membrane. It catalyses the reaction ATP(in) = ATP(out). The catalysed reaction is Ca(2+)(in) = Ca(2+)(out). It carries out the reaction Mg(2+)(in) = Mg(2+)(out). The enzyme catalyses Na(+)(in) = Na(+)(out). It catalyses the reaction K(+)(in) = K(+)(out). The catalysed reaction is Li(+)(in) = Li(+)(out). It carries out the reaction Rb(+)(in) = Rb(+)(out). The enzyme catalyses Cs(+)(in) = Cs(+)(out). It catalyses the reaction chloride(in) = chloride(out). Regulated by membrane voltage and extracellular Ca(2+). Inhibited by Gd(3+), ruthenium red, and Zn(2+) and partially inhibited by 2-aminoethoxydiphenyl borate. Its function is as follows. Pore-forming subunit of gustatory voltage-gated ion channels required for sensory perception of sweet, bitter and umami tastes. With CALHM3 forms a fast-activating voltage-gated ATP-release channel in type II taste bud cells, ATP acting as a neurotransmitter to activate afferent neural gustatory pathways. Acts both as a voltage-gated and calcium-activated ion channel: mediates neuronal excitability in response to membrane depolarization and low extracellular Ca(2+) concentration. Has poor ion selectivity and forms a wide pore (around 14 Angstroms) that mediates permeation of small ions including Ca(2+), Na(+), K(+) and Cl(-), as well as larger ions such as ATP(4-). Mediates Ca(2+) influx and downstream activation of the ERK1 and ERK2 cascade in neurons. Triggers endoplasmic reticulum stress by reducing the Ca(2+) content of the endoplasmic reticulum. May indirectly control amyloid precursor protein (APP) proteolysis and aggregated amyloid-beta (Abeta) peptides levels in a Ca(2+)-dependent manner. This Homo sapiens (Human) protein is Calcium homeostasis modulator protein 1.